Consider the following 782-residue polypeptide: Protein PAT1 homolog 1 (782 aa).

Disordered regions lie at residues 96–153 (GPKH…HSKP), 177–217 (LPES…YSAP), 332–372 (VREH…SKHM), and 460–481 (EVDSSPGFNDGSGDHKGSGKHL). The span at 108-117 (SGSFSRESSS) shows a compositional bias: low complexity. Residues 208-217 (GGSQLTYSAP) are compositionally biased toward polar residues. Residues 335–347 (HKHKSSHRSRKNR) are compositionally biased toward basic residues. The span at 348-366 (GLSQQTSDAASQKSETGLQ) shows a compositional bias: polar residues. The span at 471–481 (SGDHKGSGKHL) shows a compositional bias: basic and acidic residues.

As to quaternary structure, interacts with AFPH2/NINJA. In terms of tissue distribution, expressed in root vasculature, shoot apical meristem (SAM) and leaves.

In terms of biological role, activator of mRNA decapping. Involved in mRNA decay via decapping. Involved in the regulation of root stem cell niche identity. Maintains root stem cell niche stability through the interaction with the negative regulator of jasmonate signaling AFPH2/NINJA, and the regulation of cell division. This Arabidopsis thaliana (Mouse-ear cress) protein is Protein PAT1 homolog 1.